The primary structure comprises 378 residues: 4-hydroxy-3-methylbut-2-en-1-yl diphosphate synthase (flavodoxin) (378 aa).

4 residues coordinate [4Fe-4S] cluster: C268, C271, C303, and E310.

It belongs to the IspG family. [4Fe-4S] cluster serves as cofactor.

It carries out the reaction (2E)-4-hydroxy-3-methylbut-2-enyl diphosphate + oxidized [flavodoxin] + H2O + 2 H(+) = 2-C-methyl-D-erythritol 2,4-cyclic diphosphate + reduced [flavodoxin]. The protein operates within isoprenoid biosynthesis; isopentenyl diphosphate biosynthesis via DXP pathway; isopentenyl diphosphate from 1-deoxy-D-xylulose 5-phosphate: step 5/6. Its function is as follows. Converts 2C-methyl-D-erythritol 2,4-cyclodiphosphate (ME-2,4cPP) into 1-hydroxy-2-methyl-2-(E)-butenyl 4-diphosphate. This chain is 4-hydroxy-3-methylbut-2-en-1-yl diphosphate synthase (flavodoxin), found in Corynebacterium efficiens (strain DSM 44549 / YS-314 / AJ 12310 / JCM 11189 / NBRC 100395).